The chain runs to 222 residues: MQADFWQKRWERDQIGFHLAEVNPYLQQYWPALGLAAQSRVLVPLCGKSLDLIWLADQGFEVLGIELAEKAVEDFFREHQLQPQISQHGVFKVYAHGPIELWCGDFFALTAEDTADCTALYDRAAMIALPSPMRQRYAAHLNGLLPNGSKGLLITMDYAQEQLDGPPFAVLDDEVRQRLGGVWQLQVETERDILGESWKFLQGGVTRLVERVYRLSKQGAAR.

S-adenosyl-L-methionine is bound by residues W10, L45, E66, and R123.

It belongs to the class I-like SAM-binding methyltransferase superfamily. TPMT family.

The protein localises to the cytoplasm. The enzyme catalyses S-adenosyl-L-methionine + a thiopurine = S-adenosyl-L-homocysteine + a thiopurine S-methylether.. The chain is Thiopurine S-methyltransferase from Pseudomonas fluorescens (strain ATCC BAA-477 / NRRL B-23932 / Pf-5).